Here is a 438-residue protein sequence, read N- to C-terminus: uncharacterized protein (438 aa).

A signal peptide spans 1 to 32 (MARPLLGKTSSVRRRLESLSACSIFFFLRKFC).

This is an uncharacterized protein from Frog virus 3 (isolate Goorha) (FV-3).